Consider the following 1084-residue polypeptide: Putative tRNA-specific 2-thiouridylase (1084 aa).

Helical transmembrane passes span methionine 1–threonine 21, phenylalanine 32–isoleucine 52, and isoleucine 309–leucine 329. Catalysis depends on cysteine 538, which acts as the Nucleophile. Cysteine 538 and cysteine 715 are oxidised to a cystine. Cysteine 715 serves as the catalytic Cysteine persulfide intermediate.

It belongs to the MnmA/TRMU family.

Its subcellular location is the plastid. It is found in the apicoplast. The protein resides in the membrane. The enzyme catalyses S-sulfanyl-L-cysteinyl-[protein] + uridine(34) in tRNA + AH2 + ATP = 2-thiouridine(34) in tRNA + L-cysteinyl-[protein] + A + AMP + diphosphate + H(+). Functionally, catalyzes the 2-thiolation of uridine at the wobble position (U34) of tRNA, leading to the formation of s(2)U34. Required for apicoplast maintenance. The chain is Putative tRNA-specific 2-thiouridylase from Plasmodium falciparum (isolate 3D7).